Consider the following 240-residue polypeptide: Uridylate kinase (240 aa).

12–15 (KISG) provides a ligand contact to ATP. The segment at 20–25 (GNQGFG) is involved in allosteric activation by GTP. G54 lines the UMP pocket. G55 and R59 together coordinate ATP. Residues D74 and 135 to 142 (TGNPYFST) each bind UMP. ATP contacts are provided by Y168 and D171.

The protein belongs to the UMP kinase family. In terms of assembly, homohexamer.

It is found in the cytoplasm. The enzyme catalyses UMP + ATP = UDP + ADP. It functions in the pathway pyrimidine metabolism; CTP biosynthesis via de novo pathway; UDP from UMP (UMPK route): step 1/1. With respect to regulation, allosterically activated by GTP. Inhibited by UTP. Catalyzes the reversible phosphorylation of UMP to UDP. This Moorella thermoacetica (strain ATCC 39073 / JCM 9320) protein is Uridylate kinase.